Consider the following 62-residue polypeptide: Large ribosomal subunit protein uL29 (62 aa).

The protein belongs to the universal ribosomal protein uL29 family.

This is Large ribosomal subunit protein uL29 from Oleidesulfovibrio alaskensis (strain ATCC BAA-1058 / DSM 17464 / G20) (Desulfovibrio alaskensis).